The primary structure comprises 720 residues: DNA replication licensing factor mcm7-B (720 aa).

The C4-type zinc finger occupies 183–210 (CDQCGAETYQPIQSPTFMPLIMCPSREC). An MCM domain is found at 331 to 537 (FYEKLAASIA…NDLRLAQHIT (207 aa)). Residues Tyr344, Gly383, Ala385, Lys386, Ser387, Asn488, Arg513, and Arg603 each contribute to the ATP site. Residues 512-515 (SRFD) carry the Arginine finger motif.

This sequence belongs to the MCM family. In terms of assembly, component of the mcm2-7 complex (RLF-M). The complex forms a toroidal hexameric ring with the proposed subunit order mcm2-mcm6-mcm4-mcm7-mcm3-mcm5. The heterodimer of mmcm3/mcm5 interacts with mcm4, mmcm6, mcm7 and weakly with mcm2. The N-terminus is required for interaction with mmcm3, though this interaction may not be direct, and remains in a complex with mmcm3 throughout the cell cycle. Begins to associate with zmcm6 at the neurula stage. Component of the replisome complex. Component of the CMG helicase complex, composed of the mcm2-7 complex, the GINS complex and cdc45. In terms of processing, ubiquitinated by traip when forks converge following formation of DNA interstrand cross-links. Short ubiquitin chains on mcm7 promote recruitment of DNA glycosylase neil3. If the interstrand cross-link cannot be cleaved by neil3, the ubiquitin chains continue to grow on mcm7, promoting the unloading of the CMG helicase complex by the vcp/p97 ATPase.

The protein resides in the nucleus. Its subcellular location is the chromosome. It catalyses the reaction ATP + H2O = ADP + phosphate + H(+). Acts as a component of the mcm2-7 complex (mcm complex) which is the putative replicative helicase essential for 'once per cell cycle' DNA replication initiation and elongation in eukaryotic cells. The active ATPase sites in the mcm2-7 ring are formed through the interaction surfaces of two neighboring subunits such that a critical structure of a conserved arginine finger motif is provided in trans relative to the ATP-binding site of the Walker A box of the adjacent subunit. The six ATPase active sites, however, are likely to contribute differentially to the complex helicase activity. The existence of maternal and zygotic forms of mcm3 and mcm6 suggests that specific forms of mcm2-7 complexes may be used during different stages of development. The sequence is that of DNA replication licensing factor mcm7-B (mcm7-b) from Xenopus laevis (African clawed frog).